Here is a 95-residue protein sequence, read N- to C-terminus: Aspartyl/glutamyl-tRNA(Asn/Gln) amidotransferase subunit C (95 aa).

Belongs to the GatC family. In terms of assembly, heterotrimer of A, B and C subunits.

It catalyses the reaction L-glutamyl-tRNA(Gln) + L-glutamine + ATP + H2O = L-glutaminyl-tRNA(Gln) + L-glutamate + ADP + phosphate + H(+). It carries out the reaction L-aspartyl-tRNA(Asn) + L-glutamine + ATP + H2O = L-asparaginyl-tRNA(Asn) + L-glutamate + ADP + phosphate + 2 H(+). In terms of biological role, allows the formation of correctly charged Asn-tRNA(Asn) or Gln-tRNA(Gln) through the transamidation of misacylated Asp-tRNA(Asn) or Glu-tRNA(Gln) in organisms which lack either or both of asparaginyl-tRNA or glutaminyl-tRNA synthetases. The reaction takes place in the presence of glutamine and ATP through an activated phospho-Asp-tRNA(Asn) or phospho-Glu-tRNA(Gln). This Rhodospirillum rubrum (strain ATCC 11170 / ATH 1.1.1 / DSM 467 / LMG 4362 / NCIMB 8255 / S1) protein is Aspartyl/glutamyl-tRNA(Asn/Gln) amidotransferase subunit C.